The chain runs to 252 residues: 5-oxoprolinase subunit A (252 aa).

The protein belongs to the LamB/PxpA family. In terms of assembly, forms a complex composed of PxpA, PxpB and PxpC.

It catalyses the reaction 5-oxo-L-proline + ATP + 2 H2O = L-glutamate + ADP + phosphate + H(+). In terms of biological role, catalyzes the cleavage of 5-oxoproline to form L-glutamate coupled to the hydrolysis of ATP to ADP and inorganic phosphate. This is 5-oxoprolinase subunit A from Chloroflexus aggregans (strain MD-66 / DSM 9485).